The following is a 399-amino-acid chain: STOREKEEPER protein (399 aa).

2 disordered regions span residues 1–160 and 250–301; these read MAPK…RSLW and GISN…EEQQ. The segment covering 20 to 54 has biased composition (acidic residues); it reads EEQELVEESQEEEEQQSREEEGEEESGEETEEDEE. A compositionally biased stretch (polar residues) spans 69–79; it reads KLVQTPQKPQF. Composition is skewed to low complexity over residues 80-100 and 116-125; these read SSESGSENGSGSDSEAESGNS and AAKAATPSKP. 2 stretches are compositionally biased toward basic and acidic residues: residues 143-152 and 270-299; these read KIAEEEEKKS and KTVEVKKSSEPKKSAKVSKPKDDEKQKEEE.

It belongs to the GeBP family. As to expression, expressed in tubers and in leaves treated with sucrose.

The protein localises to the nucleus. In terms of biological role, may act as a transcriptional regulator. Binds specifically to the B-box motif, a promoter element that is required for the tuber-specific and sucrose inducible expression of the patatin gene. This is STOREKEEPER protein from Solanum tuberosum (Potato).